The chain runs to 90 residues: Probable Fe(2+)-trafficking protein (90 aa).

The protein belongs to the Fe(2+)-trafficking protein family.

Could be a mediator in iron transactions between iron acquisition and iron-requiring processes, such as synthesis and/or repair of Fe-S clusters in biosynthetic enzymes. The polypeptide is Probable Fe(2+)-trafficking protein (Acidovorax ebreus (strain TPSY) (Diaphorobacter sp. (strain TPSY))).